Here is a 600-residue protein sequence, read N- to C-terminus: tRNA uridine 5-carboxymethylaminomethyl modification enzyme MnmG (600 aa).

10 to 15 (GGGHAG) is an FAD binding site. The segment at 216–239 (ADPQPRGFTGTPGPRAAESPTWQT) is disordered. An NAD(+)-binding site is contributed by 267 to 281 (GPRYCPSIEDKVVKF).

It belongs to the MnmG family. As to quaternary structure, homodimer. Heterotetramer of two MnmE and two MnmG subunits. The cofactor is FAD.

Its subcellular location is the cytoplasm. Its function is as follows. NAD-binding protein involved in the addition of a carboxymethylaminomethyl (cmnm) group at the wobble position (U34) of certain tRNAs, forming tRNA-cmnm(5)s(2)U34. The polypeptide is tRNA uridine 5-carboxymethylaminomethyl modification enzyme MnmG (Deinococcus radiodurans (strain ATCC 13939 / DSM 20539 / JCM 16871 / CCUG 27074 / LMG 4051 / NBRC 15346 / NCIMB 9279 / VKM B-1422 / R1)).